The sequence spans 176 residues: Ribosome maturation factor RimM (176 aa).

Positions 104–176 (EDEYYFYEIL…KIIAKEMEWI (73 aa)) constitute a PRC barrel domain.

The protein belongs to the RimM family. Binds ribosomal protein uS19.

The protein localises to the cytoplasm. In terms of biological role, an accessory protein needed during the final step in the assembly of 30S ribosomal subunit, possibly for assembly of the head region. Essential for efficient processing of 16S rRNA. May be needed both before and after RbfA during the maturation of 16S rRNA. It has affinity for free ribosomal 30S subunits but not for 70S ribosomes. The protein is Ribosome maturation factor RimM of Thermotoga maritima (strain ATCC 43589 / DSM 3109 / JCM 10099 / NBRC 100826 / MSB8).